The chain runs to 120 residues: Immunoglobulin kappa variable 2D-29 (120 aa).

Residues 1–20 (MRLPAQLLGLLMLWIPGSSA) form the signal peptide. The interval 21–43 (DIVMTQTPLSLSVTPGQPASISC) is framework-1. One can recognise an Ig-like domain in the interval 21 to 120 (DIVMTQTPLS…YYCMQSIQLP (100 aa)). Cys43 and Cys113 are joined by a disulfide. The complementarity-determining-1 stretch occupies residues 44–59 (KSSQSLLHSDGKTYLY). The tract at residues 60–74 (WYLQKPGQPPQLLIY) is framework-2. Residues 75–81 (EVSNRFS) are complementarity-determining-2. A framework-3 region spans residues 82–113 (GVPDRFSGSGSGTDFTLKISRVEAEDVGVYYC). A complementarity-determining-3 region spans residues 114-120 (MQSIQLP).

As to quaternary structure, immunoglobulins are composed of two identical heavy chains and two identical light chains; disulfide-linked.

The protein resides in the secreted. It localises to the cell membrane. Functionally, v region of the variable domain of immunoglobulin light chains that participates in the antigen recognition. Immunoglobulins, also known as antibodies, are membrane-bound or secreted glycoproteins produced by B lymphocytes. In the recognition phase of humoral immunity, the membrane-bound immunoglobulins serve as receptors which, upon binding of a specific antigen, trigger the clonal expansion and differentiation of B lymphocytes into immunoglobulins-secreting plasma cells. Secreted immunoglobulins mediate the effector phase of humoral immunity, which results in the elimination of bound antigens. The antigen binding site is formed by the variable domain of one heavy chain, together with that of its associated light chain. Thus, each immunoglobulin has two antigen binding sites with remarkable affinity for a particular antigen. The variable domains are assembled by a process called V-(D)-J rearrangement and can then be subjected to somatic hypermutations which, after exposure to antigen and selection, allow affinity maturation for a particular antigen. This is Immunoglobulin kappa variable 2D-29 from Homo sapiens (Human).